We begin with the raw amino-acid sequence, 158 residues long: Small ribosomal subunit protein uS19 (158 aa).

The protein belongs to the universal ribosomal protein uS19 family.

Functionally, protein S19 forms a complex with S13 that binds strongly to the 16S ribosomal RNA. The chain is Small ribosomal subunit protein uS19 from Pyrobaculum neutrophilum (strain DSM 2338 / JCM 9278 / NBRC 100436 / V24Sta) (Thermoproteus neutrophilus).